Consider the following 141-residue polypeptide: Nucleoside triphosphatase NudI (141 aa).

Residues 1–141 (MRQRTIVCPL…RHTLALKGLL (141 aa)) form the Nudix hydrolase domain. Residues 38–59 (GGVEPGERIEEALRREVREELG) carry the Nudix box motif.

The protein belongs to the Nudix hydrolase family. NudI subfamily. As to quaternary structure, monomer. It depends on Mg(2+) as a cofactor.

It carries out the reaction a ribonucleoside 5'-triphosphate + H2O = a ribonucleoside 5'-phosphate + diphosphate + H(+). The enzyme catalyses a 2'-deoxyribonucleoside 5'-triphosphate + H2O = a 2'-deoxyribonucleoside 5'-phosphate + diphosphate + H(+). It catalyses the reaction dUTP + H2O = dUMP + diphosphate + H(+). The catalysed reaction is dTTP + H2O = dTMP + diphosphate + H(+). It carries out the reaction dCTP + H2O = dCMP + diphosphate + H(+). Its function is as follows. Catalyzes the hydrolysis of nucleoside triphosphates, with a preference for pyrimidine deoxynucleoside triphosphates (dUTP, dTTP and dCTP). The polypeptide is Nucleoside triphosphatase NudI (Salmonella agona (strain SL483)).